We begin with the raw amino-acid sequence, 258 residues long: L-2,3-butanediol dehydrogenase (258 aa).

Residues 12–14 (QGI), aspartate 33, glutamine 37, 61–62 (DV), asparagine 88, tyrosine 154, lysine 158, and 184–189 (PGIVGT) each bind NAD(+). Catalysis depends on tyrosine 154, which acts as the Proton acceptor.

It belongs to the short-chain dehydrogenases/reductases (SDR) family. Homotetramer.

The catalysed reaction is (S,S)-butane-2,3-diol + NAD(+) = (S)-acetoin + NADH + H(+). The enzyme catalyses (S)-acetoin + NAD(+) = diacetyl + NADH + H(+). Slightly activated by Ba(2+), Ca(2+), Mn(2+), Mg(2+), and Co(2+), while Hg(2+) and Cu(2+) cause marked inhibition of the activity. Ni(2+), Zn(2+) and Cd(2+) have no effect on the catalytic activity. Is also slightly inhibited by lactate, pyruvate, succinate, acetate and formate. Its function is as follows. Catalyzes the reversible reduction of (S)-acetoin to (S,S)-butane-2,3-diol (L-BD) in the presence of NADH. To a lesser extent, can also catalyze the irreversible reduction of diacetyl to (S)-acetoin. Cannot oxidize meso-BD, D-BD, 2-butanol, 1,2-propanediol, ethanol, acetol, 1,2-butanediol, 1,3-butanediol, n-butanol, and n-propanol. Cannot reduce (R)-acetoin, acetol, dihydroxyacetone and 2,4-pentanedione. The protein is L-2,3-butanediol dehydrogenase of Corynebacterium glutamicum (Brevibacterium saccharolyticum).